A 372-amino-acid chain; its full sequence is MKFIDEARIEVIAGDGGDGSASMRREKFVPFGGPDGGDGGRGGSVYVIADRNINTLIDYRYAKKHMARNGENGRGSDCYGKGGDDITLRMPVGTVINDMDTGELIADLTEHDQKVLVAKGGAGGLGNLHFKSSTNRAPRQKTDGKPGERRMLKLELKVLADVGLLGMPNAGKSTFISSVSNAKPKIADYPFTTLAPNLGVVRVGPGKSFVIADIPGLIEGAAEGAGLGHQFLRHLQRTGLLLHLVDLAPFDERVDPVAEARAIVGELRKYDESLYEKPRWLVLNKLDMVPEDERRARVADFIERFGWTGPVFEISALTGQGCEGLVYAIHDYLVEHSDAHRAELAEDLASDVRFRDAPGAGGEPHERDAGAH.

The Obg domain maps to 1–159 (MKFIDEARIE…RMLKLELKVL (159 aa)). Residues 128–147 (LHFKSSTNRAPRQKTDGKPG) form a disordered region. Positions 160–334 (ADVGLLGMPN…LVYAIHDYLV (175 aa)) constitute an OBG-type G domain. Residues 166-173 (GMPNAGKS), 191-195 (FTTLA), 213-216 (DIPG), 284-287 (NKLD), and 315-317 (SAL) each bind GTP. Mg(2+) is bound by residues Ser-173 and Thr-193.

Belongs to the TRAFAC class OBG-HflX-like GTPase superfamily. OBG GTPase family. In terms of assembly, monomer. The cofactor is Mg(2+).

Its subcellular location is the cytoplasm. An essential GTPase which binds GTP, GDP and possibly (p)ppGpp with moderate affinity, with high nucleotide exchange rates and a fairly low GTP hydrolysis rate. Plays a role in control of the cell cycle, stress response, ribosome biogenesis and in those bacteria that undergo differentiation, in morphogenesis control. The sequence is that of GTPase Obg from Burkholderia mallei (strain NCTC 10247).